The sequence spans 833 residues: Probable glucan 1,3-beta-glucosidase D (833 aa).

Basic and acidic residues predominate over residues 1–33 (MPTHSRSRDRYGGRDSDREARYDYDYARRRYAT). Residues 1–228 (MPTHSRSRDR…RKRQKKLAVV (228 aa)) are disordered. Topologically, residues 1–305 (MPTHSRSRDR…GGRPFWKRKR (305 aa)) are cytoplasmic. The segment covering 34 to 45 (DDDDDYDDDELE) has biased composition (acidic residues). Basic and acidic residues-rich tracts occupy residues 46–75 (HDLT…RDAE) and 97–172 (YGDD…ETAA). The segment covering 183-196 (SASHLLSADALAKL) has biased composition (low complexity). The span at 200-217 (YEKEERRKREIAKDAAKA) shows a compositional bias: basic and acidic residues. Residues 306 to 326 (WIGLGALIIILVIVIPVAVVV) form a helical; Signal-anchor for type II membrane protein membrane-spanning segment. The Extracellular segment spans residues 327–833 (SKKHDNKSDP…PDFGDLPEYY (507 aa)). A disordered region spans residues 331–353 (DNKSDPADSQGTSPGKSNLDGLS). N332 carries an N-linked (GlcNAc...) asparagine glycan. Residues 337-346 (ADSQGTSPGK) are compositionally biased toward polar residues. 6 N-linked (GlcNAc...) asparagine glycosylation sites follow: N378, N383, N395, N548, N560, and N569. Catalysis depends on E599, which acts as the Proton donor. N-linked (GlcNAc...) asparagine glycans are attached at residues N638, N671, and N691. Residue E704 is the Nucleophile of the active site.

The protein belongs to the glycosyl hydrolase 5 (cellulase A) family.

It localises to the cell membrane. The catalysed reaction is Successive hydrolysis of beta-D-glucose units from the non-reducing ends of (1-&gt;3)-beta-D-glucans, releasing alpha-glucose.. Glucosidase involved in the degradation of cellulosic biomass. Active on lichenan. This is Probable glucan 1,3-beta-glucosidase D (exgD) from Aspergillus fumigatus (strain CBS 144.89 / FGSC A1163 / CEA10) (Neosartorya fumigata).